We begin with the raw amino-acid sequence, 341 residues long: MAKGLLMTYALWAFGGPVGLHHLYLGRDSHALLWMLTLGGGGLGWLWEFWKLPSFVAQANGVQSWKQRPEEERPPLSLLRFASQMVVGVYFGLVALISLSSTANFYIVGLPLAVGLGVLLVAAVGNQTSDFKNTLGAAFLTSPVFYGRPIAILPISLAASITAQKHRRYKVSAVSETLSVRLYRVGLAYLAFTGPLAYSTLYNTAATINYAAETLGSFLSWFNFFPLLGRLVESVLLLPCRIWWLLVGAPGFNSSQFQEWEKLYEFVDSFQDEKRQLAHQVLGIPEGATNEEIHRSYRDLVKVWHPDHNRHQTEEAQRHFLEIQAAYEVLSQPKKPRASWR.

The TM2 domain occupies 4–50 (GLLMTYALWAFGGPVGLHHLYLGRDSHALLWMLTLGGGGLGWLWEFW). 7 helical membrane passes run 5 to 25 (LLMTYALWAFGGPVGLHHLYL), 30 to 50 (HALLWMLTLGGGGLGWLWEFW), 81 to 101 (FASQMVVGVYFGLVALISLSS), 105 to 125 (FYIVGLPLAVGLGVLLVAAVG), 135 to 155 (LGAAFLTSPVFYGRPIAILPI), 185 to 205 (VGLAYLAFTGPLAYSTLYNTA), and 232 to 252 (VESVLLLPCRIWWLLVGAPGF). The 65-residue stretch at 277 to 341 (LAHQVLGIPE…QPKKPRASWR (65 aa)) folds into the J domain.

Its subcellular location is the membrane. May function as a co-chaperone. This is DnaJ homolog subfamily C member 22 (Dnajc22) from Rattus norvegicus (Rat).